The sequence spans 377 residues: Chaperone protein DnaJ (377 aa).

Residues 4-69 (DYYEALGVTR…QKRAAYDRFG (66 aa)) enclose the J domain. The segment at 135 to 213 (GKTAQIRVPT…CHGQGRVTQE (79 aa)) adopts a CR-type zinc-finger fold. The Zn(2+) site is built by C148, C151, C165, C168, C187, C190, C201, and C204. CXXCXGXG motif repeat units follow at residues 148 to 155 (CDECSGSG), 165 to 172 (CTMCSGSG), 187 to 194 (CPGCNGRG), and 201 to 208 (CEKCHGQG).

The protein belongs to the DnaJ family. As to quaternary structure, homodimer. Zn(2+) is required as a cofactor.

It localises to the cytoplasm. Functionally, participates actively in the response to hyperosmotic and heat shock by preventing the aggregation of stress-denatured proteins and by disaggregating proteins, also in an autonomous, DnaK-independent fashion. Unfolded proteins bind initially to DnaJ; upon interaction with the DnaJ-bound protein, DnaK hydrolyzes its bound ATP, resulting in the formation of a stable complex. GrpE releases ADP from DnaK; ATP binding to DnaK triggers the release of the substrate protein, thus completing the reaction cycle. Several rounds of ATP-dependent interactions between DnaJ, DnaK and GrpE are required for fully efficient folding. Also involved, together with DnaK and GrpE, in the DNA replication of plasmids through activation of initiation proteins. The protein is Chaperone protein DnaJ of Brucella abortus (strain S19).